We begin with the raw amino-acid sequence, 79 residues long: Conotoxin PnMSGL-03 (79 aa).

The N-terminal stretch at 1–20 is a signal peptide; the sequence is MSRLGIMVLTLLLLVFIVTS. A propeptide spanning residues 21–44 is cleaved from the precursor; sequence HQDAGEKQATQRDAINFRWRRSLI. 3 disulfide bridges follow: cysteine 52-cysteine 64, cysteine 56-cysteine 73, and cysteine 63-cysteine 77. Leucine 78 carries the leucine amide modification.

It belongs to the conotoxin O3 superfamily. Expressed by the venom duct.

It is found in the secreted. This Conus pennaceus (Feathered cone) protein is Conotoxin PnMSGL-03.